Consider the following 432-residue polypeptide: Probable pectate lyase 22 (432 aa).

Residues Met1 to Ala45 form the signal peptide. Asn65 carries N-linked (GlcNAc...) asparagine glycosylation. The Ca(2+) site is built by Asp228, Asp252, and Asp256. Arg308 is an active-site residue.

It belongs to the polysaccharide lyase 1 family. The cofactor is Ca(2+).

It catalyses the reaction Eliminative cleavage of (1-&gt;4)-alpha-D-galacturonan to give oligosaccharides with 4-deoxy-alpha-D-galact-4-enuronosyl groups at their non-reducing ends.. It participates in glycan metabolism; pectin degradation; 2-dehydro-3-deoxy-D-gluconate from pectin: step 2/5. This is Probable pectate lyase 22 from Arabidopsis thaliana (Mouse-ear cress).